The primary structure comprises 679 residues: Methionine--tRNA ligase (679 aa).

Positions Pro-12–His-22 match the 'HIGH' region motif. Cys-143, Cys-146, Cys-156, and Cys-159 together coordinate Zn(2+). The 'KMSKS' region motif lies at Lys-328 to Ser-332. Lys-331 serves as a coordination point for ATP. One can recognise a tRNA-binding domain in the interval Asp-577–Lys-679.

It belongs to the class-I aminoacyl-tRNA synthetase family. MetG type 1 subfamily. Homodimer. Requires Zn(2+) as cofactor.

It is found in the cytoplasm. It catalyses the reaction tRNA(Met) + L-methionine + ATP = L-methionyl-tRNA(Met) + AMP + diphosphate. Functionally, is required not only for elongation of protein synthesis but also for the initiation of all mRNA translation through initiator tRNA(fMet) aminoacylation. The polypeptide is Methionine--tRNA ligase (Actinobacillus pleuropneumoniae serotype 5b (strain L20)).